An 82-amino-acid chain; its full sequence is Large ribosomal subunit protein bL31B (82 aa).

The protein belongs to the bacterial ribosomal protein bL31 family. Type B subfamily. Part of the 50S ribosomal subunit.

The chain is Large ribosomal subunit protein bL31B from Dichelobacter nodosus (strain VCS1703A).